The following is a 186-amino-acid chain: Large ribosomal subunit protein bL12c (186 aa).

The span at 1–11 shows a compositional bias: polar residues; it reads MASTLSTITLR. Disordered stretches follow at residues 1–23 and 162–186; these read MAST…STHA and EGVS…VSIA. The transit peptide at 1–53 directs the protein to the chloroplast; that stretch reads MASTLSTITLRSPSPSTASSTHASIPFPKKALEFPIRTPKLHHRRATFLRPLA. A compositionally biased stretch (low complexity) spans 12-23; that stretch reads SPSPSTASSTHA. Residues 162–180 show a composition bias toward basic and acidic residues; that stretch reads EGVSKDEAEDAKKQLEEAG.

It belongs to the bacterial ribosomal protein bL12 family.

It is found in the plastid. The protein localises to the chloroplast. This Nicotiana tabacum (Common tobacco) protein is Large ribosomal subunit protein bL12c (RPL12).